We begin with the raw amino-acid sequence, 474 residues long: Cysteine--tRNA ligase (474 aa).

Residue Cys34 participates in Zn(2+) binding. Residues Pro36–Asn46 carry the 'HIGH' region motif. Cys219, His244, and Glu248 together coordinate Zn(2+). The 'KMSKS' region motif lies at Lys276 to Ser280. Lys279 contacts ATP.

Belongs to the class-I aminoacyl-tRNA synthetase family. Monomer. It depends on Zn(2+) as a cofactor.

Its subcellular location is the cytoplasm. It catalyses the reaction tRNA(Cys) + L-cysteine + ATP = L-cysteinyl-tRNA(Cys) + AMP + diphosphate. In Chlamydia pneumoniae (Chlamydophila pneumoniae), this protein is Cysteine--tRNA ligase (cysS).